The sequence spans 466 residues: Reticulophagy regulator 3 (466 aa).

At 1 to 80 (MEEAEGVAAA…WCLGLNAAFW (80 aa)) the chain is on the cytoplasmic side. Residue Ser26 is modified to Phosphoserine. A helical transmembrane segment spans residues 81-101 (FFALTSLRFVFLLAFSLMIIV). Residues 102-168 (CIDQWKNKIW…LLFKKQNPGK (67 aa)) lie on the Lumenal side of the membrane. Residues 169–187 (FCLLSCGVLTFLAMLGRYI) form a helical membrane-spanning segment. The Cytoplasmic portion of the chain corresponds to 188-192 (PGLLL). A helical membrane pass occupies residues 193 to 211 (SYLMLVIIMMWPLAVYHRL). At 212-381 (WDRAYVRLKP…ASRNEAALPE (170 aa)) the chain is on the lumenal side. The disordered stretch occupies residues 244-263 (RRRALHSERATDSHSDSEEE). Over residues 248-259 (LHSERATDSHSD) the composition is skewed to basic and acidic residues. Phosphothreonine is present on Thr254. A phosphoserine mark is found at Ser258 and Ser260. At Thr283 the chain carries Phosphothreonine. A phosphoserine mark is found at Ser285, Ser288, Ser293, and Ser303. Positions 285–335 (SEHSDAEVSCTENGTFNLSRGQTPLTEGSEDLDGHSDPEESFARDLPDFPS) are disordered. The span at 294 to 310 (CTENGTFNLSRGQTPLT) shows a compositional bias: polar residues. Phosphothreonine is present on residues Thr307 and Thr310. Residues Ser313, Ser320, and Ser360 each carry the phosphoserine modification. Positions 316-331 (LDGHSDPEESFARDLP) are enriched in basic and acidic residues. A helical transmembrane segment spans residues 382–401 (LLLSSLPGGSNLTSNLASLV). Over 402–466 (SQGMIQLALS…QLDPASSRSH (65 aa)) the chain is Cytoplasmic. Residues 412–444 (EASQTDPSGPPPRRATRGFLRAPSSDLDTDAEG) are disordered. Residue Thr440 is modified to Phosphothreonine. The LIR motif motif lies at 445-450 (DDFELL).

This sequence belongs to the RETREG family. In terms of assembly, interacts with ATG8 family modifier proteins MAP1LC3A, MAP1LC3B, GABARAPL1 and GABARAPL2. Also interacts with ATG8 family modifier protein GABARAP. Interacts with CANX. Interacts with RTN4 isoform B. Widely expressed with highest levels in brain, lung, liver, muscle and spleen (protein level). Mainly expressed in the central nervous system and in parenchymatous organs including liver, lung and kidney.

The protein localises to the endoplasmic reticulum membrane. In terms of biological role, endoplasmic reticulum (ER)-anchored autophagy regulator which exists in an inactive state under basal conditions but is activated following cellular stress. When activated, induces ER fragmentation and mediates ER delivery into lysosomes through sequestration into autophagosomes via interaction with ATG8 family proteins. Promotes ER membrane curvature and ER tubulation required for subsequent ER fragmentation and engulfment into autophagosomes. Required for collagen quality control in a LIR motif-dependent manner. Mediates NRF1-enhanced neurite outgrowth. The chain is Reticulophagy regulator 3 (Retreg3) from Mus musculus (Mouse).